Consider the following 391-residue polypeptide: Elongation factor Tu (391 aa).

The region spanning 10–201 (KPHVNIGTIG…AVDEFIPTPE (192 aa)) is the tr-type G domain. The G1 stretch occupies residues 19 to 26 (GHVDHGKT). 19–26 (GHVDHGKT) lines the GTP pocket. T26 lines the Mg(2+) pocket. Residues 55 to 59 (GITIS) form a G2 region. Residues 76–79 (DCPG) are G3. GTP contacts are provided by residues 76 to 80 (DCPGH) and 131 to 134 (NKVD). The interval 131–134 (NKVD) is G4. Residues 169 to 171 (SAL) are G5.

The protein belongs to the TRAFAC class translation factor GTPase superfamily. Classic translation factor GTPase family. EF-Tu/EF-1A subfamily. Monomer.

The protein localises to the cytoplasm. It catalyses the reaction GTP + H2O = GDP + phosphate + H(+). In terms of biological role, GTP hydrolase that promotes the GTP-dependent binding of aminoacyl-tRNA to the A-site of ribosomes during protein biosynthesis. This chain is Elongation factor Tu, found in Roseobacter denitrificans (strain ATCC 33942 / OCh 114) (Erythrobacter sp. (strain OCh 114)).